A 500-amino-acid polypeptide reads, in one-letter code: Putative glucokinase-2 (500 aa).

S2 bears the N-acetylserine mark. Residue S2 is modified to Phosphoserine. A Hexokinase domain is found at 12–498; it reads EALEDAVVEI…SGVGAALCAL (487 aa). A hexokinase small subdomain region spans residues 74–217; the sequence is NGTERGVLLA…LSMINVVALT (144 aa). K110 is a binding site for ATP. The glucose-binding stretch occupies residues 159-185; that stretch reads KMGFTFSYPVDQTSLSSGTLIRWTKSF. The hexokinase large subdomain stretch occupies residues 218-487; sequence NDTVGTFLSH…RKIHLRLAKD (270 aa). S470 is modified (phosphoserine). 487-492 serves as a coordination point for ATP; sequence DGSGVG.

The protein belongs to the hexokinase family.

It localises to the cytoplasm. The enzyme catalyses D-glucose + ATP = D-glucose 6-phosphate + ADP + H(+). Its pathway is carbohydrate degradation; glycolysis; D-glyceraldehyde 3-phosphate and glycerone phosphate from D-glucose: step 1/4. Functionally, putative glucokinase involved in phosphorylation of aldohexoses and glucose uptake. Involved in sporulation. Required for the full activation of the early meiotic inducer IME1. This is Putative glucokinase-2 (EMI2) from Saccharomyces cerevisiae (strain ATCC 204508 / S288c) (Baker's yeast).